The sequence spans 273 residues: MHEAQIRVAIVGAGGRMGRQLIQAAMAMEGVQLGAALEREGSSLLGSDAGELAGVGKTGVIIQSDLASVKDDFDVLVDFTRPEGTLAHLAFCRKHGKGMVIGTTGFDDAGKQAIREASQEIAIVFAANFSVGVNVMLKLLEKAAKVMGDYTDIEIIEAHHRHKVDAPSGTALAMGEAIAGALDKDLKDCAVYSREGYTGERVPGTIGFATVRAGDIVGEHTAMFADIGERVEITHKASSRMTFANGALRSALWLKTKKNGLFDMRDVLGLDVL.

NAD(+)-binding positions include 12–17 (GAGGRM) and Glu-38. Residue Arg-39 participates in NADP(+) binding. Residues 102-104 (GTT) and 126-129 (AANF) each bind NAD(+). His-159 (proton donor/acceptor) is an active-site residue. Position 160 (His-160) interacts with (S)-2,3,4,5-tetrahydrodipicolinate. The Proton donor role is filled by Lys-163. Residue 169–170 (GT) participates in (S)-2,3,4,5-tetrahydrodipicolinate binding.

The protein belongs to the DapB family. Homotetramer.

It is found in the cytoplasm. The enzyme catalyses (S)-2,3,4,5-tetrahydrodipicolinate + NAD(+) + H2O = (2S,4S)-4-hydroxy-2,3,4,5-tetrahydrodipicolinate + NADH + H(+). It carries out the reaction (S)-2,3,4,5-tetrahydrodipicolinate + NADP(+) + H2O = (2S,4S)-4-hydroxy-2,3,4,5-tetrahydrodipicolinate + NADPH + H(+). It functions in the pathway amino-acid biosynthesis; L-lysine biosynthesis via DAP pathway; (S)-tetrahydrodipicolinate from L-aspartate: step 4/4. In terms of biological role, catalyzes the conversion of 4-hydroxy-tetrahydrodipicolinate (HTPA) to tetrahydrodipicolinate. In Salmonella schwarzengrund (strain CVM19633), this protein is 4-hydroxy-tetrahydrodipicolinate reductase.